The primary structure comprises 501 residues: MKKVILVVIDGLGLRSEIHGNAFQMANTPFFDKLFSEYPNTLIQASGEYVGLPDGQIGNSEVGHLNIGAGRVVYTGLSLINKALKDDKFKENQVFLNAFNKVKENNSTLHLMGLLSPGGVHSLEAHLFEILKQAHNSGVENVAVHVFGDGRDVAPKSIRESLEKLQELVDKYGYKIATISGRFYSMDRDKMFDRTEKAYKAILGKSGNEFSSALEYLDLQYSQNITDEFLEPAKNSTLDSRYFLKDNDAVIFFNFRPDRARQLSHLILNSSLYDYQPSHLVKVSDFVSMMKYEGIKCNIAYEEMLVNNPIGKVFEDANKTQLRVAETQKYAHVTYFMDGGVDVEYKNSKRIMVDSLKVESYADTPQMSAEEITSQVISHAKDFDLTILNYANPDMVGHTGVLESTLVALEVLDKQLSRLVKWAEKNKITVFITADHGNAEVMLDENNKPVTKHTSSPVMLVTSDKSLKLKPGKLANIAPTVLDYMGMAKPKEMNENSLLDK.

Mn(2+) contacts are provided by D10 and S60. S60 acts as the Phosphoserine intermediate in catalysis. Substrate is bound by residues H121, 151-152, R182, R188, 256-259, and K329; these read RD and RPDR. Residues D394, H398, D435, H436, and H453 each coordinate Mn(2+).

The protein belongs to the BPG-independent phosphoglycerate mutase family. In terms of assembly, monomer. The cofactor is Mn(2+).

The catalysed reaction is (2R)-2-phosphoglycerate = (2R)-3-phosphoglycerate. Its pathway is carbohydrate degradation; glycolysis; pyruvate from D-glyceraldehyde 3-phosphate: step 3/5. In terms of biological role, catalyzes the interconversion of 2-phosphoglycerate and 3-phosphoglycerate. The sequence is that of 2,3-bisphosphoglycerate-independent phosphoglycerate mutase from Mycoplasmopsis synoviae (strain 53) (Mycoplasma synoviae).